The following is a 433-amino-acid chain: Casein kinase 1-like protein 5 (433 aa).

The 270-residue stretch at 9 to 278 (FRLGRKIGSG…LKRLFRNLFI (270 aa)) folds into the Protein kinase domain. Residues 15–23 (IGSGSFGEI) and Lys-38 each bind ATP. Asp-128 serves as the catalytic Proton acceptor. The tract at residues 297-433 (QSQSGNPQPR…DDVEPQSKAL (137 aa)) is disordered. The segment covering 342–359 (LKQKDKNGNDSAIAKDKL) has biased composition (basic and acidic residues). Over residues 362–375 (GSLNLGRSEGSSSR) the composition is skewed to low complexity. Ser-390 is modified (phosphoserine). Over residues 407 to 423 (INNNAGDETAATPQSNG) the composition is skewed to polar residues.

This sequence belongs to the protein kinase superfamily. CK1 Ser/Thr protein kinase family. Casein kinase I subfamily. In terms of assembly, monomer. In terms of processing, autophosphorylated.

It localises to the cytoplasm. It carries out the reaction L-seryl-[protein] + ATP = O-phospho-L-seryl-[protein] + ADP + H(+). The catalysed reaction is L-threonyl-[protein] + ATP = O-phospho-L-threonyl-[protein] + ADP + H(+). Its function is as follows. Casein kinases are operationally defined by their preferential utilization of acidic proteins such as caseins as substrates. It can phosphorylate a large number of proteins. This Arabidopsis thaliana (Mouse-ear cress) protein is Casein kinase 1-like protein 5.